Consider the following 716-residue polypeptide: Polyribonucleotide nucleotidyltransferase (716 aa).

Mg(2+)-binding residues include aspartate 495 and aspartate 501. The KH domain maps to 562-621 (PRLFRIQINPEQIGLVIGPGGKTIRSITEQTGAKIDIEDTGAVTISAVDADSALRAKSII). The 69-residue stretch at 631–699 (GDVYIGKVTR…QKGRVNLTRK (69 aa)) folds into the S1 motif domain.

This sequence belongs to the polyribonucleotide nucleotidyltransferase family. It depends on Mg(2+) as a cofactor.

Its subcellular location is the cytoplasm. It catalyses the reaction RNA(n+1) + phosphate = RNA(n) + a ribonucleoside 5'-diphosphate. In terms of biological role, involved in mRNA degradation. Catalyzes the phosphorolysis of single-stranded polyribonucleotides processively in the 3'- to 5'-direction. This Synechococcus elongatus (strain ATCC 33912 / PCC 7942 / FACHB-805) (Anacystis nidulans R2) protein is Polyribonucleotide nucleotidyltransferase.